Here is a 142-residue protein sequence, read N- to C-terminus: Large ribosomal subunit protein uL13 (142 aa).

The protein belongs to the universal ribosomal protein uL13 family. As to quaternary structure, part of the 50S ribosomal subunit.

This protein is one of the early assembly proteins of the 50S ribosomal subunit, although it is not seen to bind rRNA by itself. It is important during the early stages of 50S assembly. The chain is Large ribosomal subunit protein uL13 from Pseudoalteromonas atlantica (strain T6c / ATCC BAA-1087).